Here is a 135-residue protein sequence, read N- to C-terminus: Mediator of RNA polymerase II transcription subunit 10 (135 aa).

The protein belongs to the Mediator complex subunit 10 family. In terms of assembly, component of the Mediator complex, which is composed of MED1, MED4, MED6, MED7, MED8, MED9, MED10, MED11, MED12, MED13, MED13L, MED14, MED15, MED16, MED17, MED18, MED19, MED20, MED21, MED22, MED23, MED24, MED25, MED26, MED27, MED29, MED30, MED31, CCNC, CDK8 and CDC2L6/CDK11. The MED12, MED13, CCNC and CDK8 subunits form a distinct module termed the CDK8 module. Mediator containing the CDK8 module is less active than Mediator lacking this module in supporting transcriptional activation. Individual preparations of the Mediator complex lacking one or more distinct subunits have been variously termed ARC, CRSP, DRIP, PC2, SMCC and TRAP.

It localises to the nucleus. Its function is as follows. Component of the Mediator complex, a coactivator involved in the regulated transcription of nearly all RNA polymerase II-dependent genes. Mediator functions as a bridge to convey information from gene-specific regulatory proteins to the basal RNA polymerase II transcription machinery. Mediator is recruited to promoters by direct interactions with regulatory proteins and serves as a scaffold for the assembly of a functional preinitiation complex with RNA polymerase II and the general transcription factors. In Macaca fascicularis (Crab-eating macaque), this protein is Mediator of RNA polymerase II transcription subunit 10 (MED10).